The primary structure comprises 167 residues: Epithelial membrane protein 2 (167 aa).

The helical transmembrane segment at 1–21 (MLVLLAFIIAFHITSAALLFI) threads the bilayer. Asn44, Asn47, and Asn52 each carry an N-linked (GlcNAc...) asparagine glycan. 3 consecutive transmembrane segments (helical) span residues 67–87 (TMILSTILCCIAFFIFVLQLF), 95–115 (FVLTSIIQLMSCLCVMIAASI), and 143–163 (YILAWVAFACTFISGMMYLIL).

Belongs to the PMP-22/EMP/MP20 family. Interacts with PTK2; regulates PTK2 activation and localization. Interacts with ITGB3; regulates the levels of the heterodimer ITGA5-ITGB3 integrin surface expression. Interacts with P2RX7 (via C-terminus). Interacts with ITGB1; the interaction may be direct or indirect and ITGB1 has a heterodimer form. In terms of tissue distribution, expressed in ciliary body epithelia, sclera, cornea, and retinal pigment epithelium (at protein level). Expressed in lung and endometrial tissue; expression is particularly abundant in secretory endometrium (at protein level). Expressed in placental villous syncytiotrophoblasts and cytotrophoblasts and on the membrane of interstitial trophoblasts (at protein level).

Its subcellular location is the golgi apparatus membrane. The protein localises to the cell membrane. It is found in the apical cell membrane. It localises to the membrane raft. The protein resides in the cytoplasm. Its subcellular location is the nucleus. The protein localises to the perinuclear region. Functionally, functions as a key regulator of cell membrane composition by regulating protein surface expression. Also, plays a role in regulation of processes including cell migration, cell proliferation, cell contraction and cell adhesion. Regulates transepithelial migration of neutrophils into the alveolar lumen, potentially via mediation of cell surface expression of adhesion markers and lipid raft formation. Negatively regulates caveolae formation by reducing CAV1 expression and CAV1 amount by increasing lysosomal degradation. Facilitates surface trafficking and formation of lipid rafts bearing GPI-anchor proteins. Regulates surface expression of MHC1 and ICAM1 proteins increasing susceptibility to T-cell mediated cytotoxicity. Regulates the plasma membrane expression of the integrin heterodimers ITGA6-ITGB1, ITGA5-ITGB3 and ITGA5-ITGB1 resulting in modulation of cell-matrix adhesion. Also regulates many processes through PTK2. Regulates blood vessel endothelial cell migration and angiogenesis by regulating VEGF protein expression through PTK2 activation. Regulates cell migration and cell contraction through PTK2 and SRC activation. Regulates focal adhesion density, F-actin conformation and cell adhesion capacity through interaction with PTK2. Positively regulates cell proliferation. Plays a role during cell death and cell blebbing. Promotes angiogenesis and vasculogenesis through induction of VEGFA via a HIF1A-dependent pathway. Also plays a role in embryo implantation by regulating surface trafficking of integrin heterodimer ITGA5-ITGB3. Plays a role in placental angiogenesis and uterine natural killer cell regulation at the maternal-fetal placental interface, however not required in the maternal tissues for a viable pregnancy. Involved in the early stages of embryogenic development and cardiogenesis, potentially via regulation of epithelial-mesenchymal transition timing. May play a role in glomerular filtration. The sequence is that of Epithelial membrane protein 2 (EMP2) from Homo sapiens (Human).